The sequence spans 207 residues: Dephospho-CoA kinase (207 aa).

One can recognise a DPCK domain in the interval 8 to 207 (AIALTGSIGS…LPCVDCVQSS (200 aa)). 16–21 (GSGKST) is an ATP binding site.

It belongs to the CoaE family.

It localises to the cytoplasm. The enzyme catalyses 3'-dephospho-CoA + ATP = ADP + CoA + H(+). It functions in the pathway cofactor biosynthesis; coenzyme A biosynthesis; CoA from (R)-pantothenate: step 5/5. Functionally, catalyzes the phosphorylation of the 3'-hydroxyl group of dephosphocoenzyme A to form coenzyme A. The sequence is that of Dephospho-CoA kinase from Helicobacter hepaticus (strain ATCC 51449 / 3B1).